The following is a 529-amino-acid chain: Glucose-6-phosphate isomerase (529 aa).

Catalysis depends on E322, which acts as the Proton donor. Active-site residues include H351 and K455.

Belongs to the GPI family.

It is found in the cytoplasm. The enzyme catalyses alpha-D-glucose 6-phosphate = beta-D-fructose 6-phosphate. It participates in carbohydrate biosynthesis; gluconeogenesis. It functions in the pathway carbohydrate degradation; glycolysis; D-glyceraldehyde 3-phosphate and glycerone phosphate from D-glucose: step 2/4. Functionally, catalyzes the reversible isomerization of glucose-6-phosphate to fructose-6-phosphate. In Cyanothece sp. (strain PCC 7425 / ATCC 29141), this protein is Glucose-6-phosphate isomerase.